A 653-amino-acid chain; its full sequence is Pentatricopeptide repeat-containing protein At3g14730 (653 aa).

PPR repeat units follow at residues 59 to 93, 95 to 119, 125 to 159, 160 to 193, 194 to 224, 226 to 260, 261 to 295, 296 to 326, 327 to 361, 362 to 396, 401 to 431, 432 to 466, 467 to 497, and 503 to 537; these read NVAT…GFLD, SPRA…VLVF, DVFG…GILP, DKYT…GFDS, DCYV…LPDR, DSVL…GVGV, SRHT…GSGS, DIVV…MDER, DLFT…GIRP, DIVT…GLLN, NEFI…MRVK, DSAS…GVKP, DEIT…METV, and TSDH…DNPV. The tract at residues 538 to 613 is type E motif; sequence VWRSILSSCR…TPGCSWIVLK (76 aa). Residues 614-644 are type E(+) motif; the sequence is NGVHTFFTGNQTHPEFKSIHDWLSLVISHMH.

The protein belongs to the PPR family. PCMP-E subfamily.

The chain is Pentatricopeptide repeat-containing protein At3g14730 (PCMP-E31) from Arabidopsis thaliana (Mouse-ear cress).